Consider the following 220-residue polypeptide: Meiotic nuclear division protein 1 homolog (220 aa).

A coiled-coil region spans residues Ser76–Cys147.

It belongs to the MND1 family.

The protein localises to the nucleus. Its function is as follows. Required for proper homologous chromosome pairing and efficient cross-over and intragenic recombination during meiosis. Stimulates both DMC1- and RAD51-mediated homologous strand assimilation, which is required for the resolution of meiotic double-strand breaks. The protein is Meiotic nuclear division protein 1 homolog of Danio rerio (Zebrafish).